A 420-amino-acid chain; its full sequence is Histidine--tRNA ligase (420 aa).

Belongs to the class-II aminoacyl-tRNA synthetase family. As to quaternary structure, homodimer.

The protein resides in the cytoplasm. It carries out the reaction tRNA(His) + L-histidine + ATP = L-histidyl-tRNA(His) + AMP + diphosphate + H(+). The protein is Histidine--tRNA ligase (hisS) of Thermotoga maritima (strain ATCC 43589 / DSM 3109 / JCM 10099 / NBRC 100826 / MSB8).